The chain runs to 159 residues: Riboflavin kinase (159 aa).

38-43 (GLGEGR) contributes to the CDP binding site. Mg(2+) contacts are provided by Thr67 and Asn69. Thr126 and Glu134 together coordinate FMN. Residue 139-142 (HKLR) coordinates CDP.

The protein belongs to the archaeal riboflavin kinase family. It depends on Mg(2+) as a cofactor.

It carries out the reaction riboflavin + CTP = CDP + FMN + H(+). It participates in cofactor biosynthesis; FMN biosynthesis; FMN from riboflavin (CTP route): step 1/1. In terms of biological role, catalyzes the CTP-dependent phosphorylation of riboflavin (vitamin B2) to form flavin mononucleotide (FMN). The polypeptide is Riboflavin kinase (Sulfolobus acidocaldarius (strain ATCC 33909 / DSM 639 / JCM 8929 / NBRC 15157 / NCIMB 11770)).